The sequence spans 168 residues: G/U mismatch-specific DNA glycosylase (168 aa).

Belongs to the uracil-DNA glycosylase (UDG) superfamily. TDG/mug family. Binds DNA as a monomer.

The protein localises to the cytoplasm. It catalyses the reaction Specifically hydrolyzes mismatched double-stranded DNA and polynucleotides, releasing free uracil.. In terms of biological role, excises ethenocytosine and uracil, which can arise by alkylation or deamination of cytosine, respectively, from the corresponding mispairs with guanine in ds-DNA. It is capable of hydrolyzing the carbon-nitrogen bond between the sugar-phosphate backbone of the DNA and the mispaired base. The complementary strand guanine functions in substrate recognition. Required for DNA damage lesion repair in stationary-phase cells. In Enterobacter sp. (strain 638), this protein is G/U mismatch-specific DNA glycosylase.